The chain runs to 353 residues: Nuclear hormone receptor family member nhr-27 (353 aa).

Positions Val-24–Thr-102 form a DNA-binding region, nuclear receptor. NR C4-type zinc fingers lie at residues Cys-27–Cys-47 and Cys-64–Cys-85. The region spanning Glu-119–Phe-351 is the NR LBD domain. The AF-2 stretch occupies residues Gln-340–Phe-351.

This sequence belongs to the nuclear hormone receptor family.

It localises to the nucleus. Its function is as follows. Ligand-activated transcription factor. Involved in lifespan extension in a manner dependent upon mitochondrial function. The sequence is that of Nuclear hormone receptor family member nhr-27 from Caenorhabditis elegans.